We begin with the raw amino-acid sequence, 178 residues long: GTP-dependent dephospho-CoA kinase (178 aa).

Asp-48, Ile-49, Asp-67, Lys-69, and Glu-126 together coordinate GTP.

It belongs to the GTP-dependent DPCK family.

It catalyses the reaction 3'-dephospho-CoA + GTP = GDP + CoA + H(+). Its pathway is cofactor biosynthesis; coenzyme A biosynthesis. Catalyzes the GTP-dependent phosphorylation of the 3'-hydroxyl group of dephosphocoenzyme A to form coenzyme A (CoA). The polypeptide is GTP-dependent dephospho-CoA kinase (Methanothrix thermoacetophila (strain DSM 6194 / JCM 14653 / NBRC 101360 / PT) (Methanosaeta thermophila)).